A 389-amino-acid polypeptide reads, in one-letter code: Flap endonuclease 1 (389 aa).

An N-domain region spans residues 1–105 (MGIKGLNKLL…GELAKRKERR (105 aa)). Asp34 is a Mg(2+) binding site. The DNA site is built by Arg47 and Arg71. Mg(2+) contacts are provided by Asp87, Glu170, Glu172, Asp191, and Asp193. The interval 134-265 (DVTRFEKRTV…QTALKLMKEH (132 aa)) is I-domain. Residue Glu170 coordinates DNA. 2 residues coordinate DNA: Gly243 and Asp245. A Mg(2+)-binding site is contributed by Asp245. Positions 351–359 (PQARLDGFF) are interaction with PCNA. The disordered stretch occupies residues 360-389 (KVMPKEGGEKRKADDKKTKGKKPATKKAKK). Basic and acidic residues predominate over residues 362–376 (MPKEGGEKRKADDKK). Positions 377 to 389 (TKGKKPATKKAKK) are enriched in basic residues.

It belongs to the XPG/RAD2 endonuclease family. FEN1 subfamily. As to quaternary structure, interacts with PCNA. Three molecules of FEN1 bind to one PCNA trimer with each molecule binding to one PCNA monomer. PCNA stimulates the nuclease activity without altering cleavage specificity. Requires Mg(2+) as cofactor. Post-translationally, phosphorylated. Phosphorylation upon DNA damage induces relocalization to the nuclear plasma.

The protein localises to the nucleus. Its subcellular location is the nucleolus. It is found in the nucleoplasm. The protein resides in the mitochondrion. Structure-specific nuclease with 5'-flap endonuclease and 5'-3' exonuclease activities involved in DNA replication and repair. During DNA replication, cleaves the 5'-overhanging flap structure that is generated by displacement synthesis when DNA polymerase encounters the 5'-end of a downstream Okazaki fragment. It enters the flap from the 5'-end and then tracks to cleave the flap base, leaving a nick for ligation. Also involved in the long patch base excision repair (LP-BER) pathway, by cleaving within the apurinic/apyrimidinic (AP) site-terminated flap. Acts as a genome stabilization factor that prevents flaps from equilibrating into structures that lead to duplications and deletions. Also possesses 5'-3' exonuclease activity on nicked or gapped double-stranded DNA, and exhibits RNase H activity. Also involved in replication and repair of rDNA and in repairing mitochondrial DNA. The protein is Flap endonuclease 1 of Yarrowia lipolytica (strain CLIB 122 / E 150) (Yeast).